A 150-amino-acid polypeptide reads, in one-letter code: MNNIQIRNYQPGDFQQLCAIFIRAVTMTASQHYSPQQISAWAQIDESRWKEKLAKSQVWVAIINAQPVGFISRIEHYIDMLFVDPEYTRRGVASALLKPLIKSESELTVDASITAKPFFERYGFQTVKQQRVECRGAWFTNFYMRYKPQH.

Residues 4–149 form the N-acetyltransferase domain; it reads IQIRNYQPGD…TNFYMRYKPQ (146 aa).

The protein belongs to the acetyltransferase family.

This is an uncharacterized protein from Escherichia coli (strain K12).